Consider the following 469-residue polypeptide: Light-independent protochlorophyllide reductase subunit N (469 aa).

Residues Cys-24, Cys-49, and Cys-109 each coordinate [4Fe-4S] cluster.

This sequence belongs to the BchN/ChlN family. Protochlorophyllide reductase is composed of three subunits; ChlL, ChlN and ChlB. Forms a heterotetramer of two ChlB and two ChlN subunits. The cofactor is [4Fe-4S] cluster.

It catalyses the reaction chlorophyllide a + oxidized 2[4Fe-4S]-[ferredoxin] + 2 ADP + 2 phosphate = protochlorophyllide a + reduced 2[4Fe-4S]-[ferredoxin] + 2 ATP + 2 H2O. Its pathway is porphyrin-containing compound metabolism; chlorophyll biosynthesis (light-independent). In terms of biological role, component of the dark-operative protochlorophyllide reductase (DPOR) that uses Mg-ATP and reduced ferredoxin to reduce ring D of protochlorophyllide (Pchlide) to form chlorophyllide a (Chlide). This reaction is light-independent. The NB-protein (ChlN-ChlB) is the catalytic component of the complex. The protein is Light-independent protochlorophyllide reductase subunit N of Gloeobacter violaceus (strain ATCC 29082 / PCC 7421).